The sequence spans 803 residues: Phenylalanine--tRNA ligase beta subunit (803 aa).

The tRNA-binding domain maps to 39 to 151 (SMKFSGIKIG…KNAIIGEDIK (113 aa)). One can recognise a B5 domain in the interval 406–482 (PKKILIKLYK…RFYGFEKIPI (77 aa)). Mg(2+) is bound by residues Asp466 and Asp470. The FDX-ACB domain maps to 707–800 (SDIPFNYRDI…LKKNFLIEIR (94 aa)).

This sequence belongs to the phenylalanyl-tRNA synthetase beta subunit family. Type 1 subfamily. Tetramer of two alpha and two beta subunits. Mg(2+) is required as a cofactor.

The protein localises to the cytoplasm. The enzyme catalyses tRNA(Phe) + L-phenylalanine + ATP = L-phenylalanyl-tRNA(Phe) + AMP + diphosphate + H(+). The chain is Phenylalanine--tRNA ligase beta subunit from Wigglesworthia glossinidia brevipalpis.